Here is a 119-residue protein sequence, read N- to C-terminus: Putative ankyrin repeat domain-containing protein 26-like 1 (119 aa).

A coiled-coil region spans residues Glu15–Lys112.

The sequence is that of Putative ankyrin repeat domain-containing protein 26-like 1 (ANKRD36BP1) from Homo sapiens (Human).